The chain runs to 172 residues: MRILPARHRQLFKEPFGTLFHSFEEVLKFLPGKTVFSVGDVVTANLLRAGRPPEVAIVDGHTMRQPYPGVNIPEYHQLLVKNPAGGLTEDLIDATQIAASRQGTVIQVEGEEDLAVVPLAMHAPLGTVILYGQPGEGVVLLSITPAMKKRAEELFTCFEEVSTPTAREVFNI.

Positions 40, 41, 42, 59, and 112 each coordinate GTP.

It belongs to the GTP-dependent DPCK family.

The catalysed reaction is 3'-dephospho-CoA + GTP = GDP + CoA + H(+). It participates in cofactor biosynthesis; coenzyme A biosynthesis. Catalyzes the GTP-dependent phosphorylation of the 3'-hydroxyl group of dephosphocoenzyme A to form coenzyme A (CoA). This chain is GTP-dependent dephospho-CoA kinase, found in Methanospirillum hungatei JF-1 (strain ATCC 27890 / DSM 864 / NBRC 100397 / JF-1).